A 241-amino-acid chain; its full sequence is Enterotoxin type H (241 aa).

The first 24 residues, 1–24 (MINKIKILFSFLALLLSFTSYAKA), serve as a signal peptide directing secretion. Cys106 and Cys116 are oxidised to a cystine. Positions 191, 230, and 232 each coordinate Zn(2+).

It belongs to the staphylococcal/streptococcal toxin family. Interacts with host MHC class II molecules composed of alpha/HLA-DRA and beta/HLA-DRB1 chains. Interacts with host TCR alpha-chain TRAV27. It depends on Zn(2+) as a cofactor.

It localises to the secreted. Staphylococcal enterotoxin that activates the host immune system by binding as unprocessed molecules to major histocompatibility (MHC) complex class II and T-cell receptor (TCR) molecules via their alpha domain, in particular TRAV27. In turn, this ternary complex activates a large number of T-lymphocytes initiating a systemic release of pro-inflammatory cytokines. Also causes the intoxication staphylococcal food poisoning syndrome. The illness characterized by high fever, hypotension, diarrhea, shock, and in some cases death. This chain is Enterotoxin type H (entH), found in Staphylococcus aureus.